A 518-amino-acid chain; its full sequence is T-box transcription factor TBX5 (518 aa).

The tract at residues 1–46 (MADTDEGFGLARTPLEPDSKDRSCDSKPESALGAPSKSPSSPQAAF) is disordered. Residues 15 to 28 (LEPDSKDRSCDSKP) are compositionally biased toward basic and acidic residues. Low complexity predominate over residues 34–45 (APSKSPSSPQAA). The segment at residues 58-238 (LHERELWLKF…NNPFAKGFRG (181 aa)) is a DNA-binding region (T-box). 2 disordered regions span residues 254 to 307 (EYPV…LLPP) and 330 to 352 (ECSS…EEDT). Over residues 269–301 (SNHSPFSSETRALSTSSNLGSQYQCENGVSGPS) the composition is skewed to polar residues. Lysine 339 carries the N6-acetyllysine modification.

As to quaternary structure, monomer. Homodimer (via the T-box); binds DNA as homodimer. Interacts (via the T-box) with NKX2-5 (via the homeobox); this complex binds DNA. Interacts with GATA4. Interacts with KAT2A and KAT2B. In terms of processing, acetylation at Lys-339 by KAT2A and KAT2B promotes nuclear retention.

It is found in the nucleus. Its subcellular location is the cytoplasm. In terms of biological role, DNA-binding protein that regulates the transcription of several genes and is involved in heart development and limb pattern formation. Binds to the core DNA motif of NPPA promoter. This is T-box transcription factor TBX5 (Tbx5) from Mus musculus (Mouse).